A 277-amino-acid chain; its full sequence is MGIRVYKPTTNGRRNMTSLDFAEITTSTPEKSLLVALKSKAGRNNNGRITVRHQGGGHKRFYRLVDFKRNKDNVEAVVKTIEYDPNRSANIALVHYTDGVKAYIIAPKGLEVGQRIVSGPEADIKVGNALPLANIPVGTLIHNIELKPGRGGELVRAAGASAQVLGSEGKYVLVRLQSGEVRMILGTCRATVGVVGNEQHGLVNLGKAGRSRWKGIRPTVRGSVMNPNDHPHGGGEGKAPVGRKAPSTPWGKPALGLKTRNKKAKSDKLIVRRRNEK.

The tract at residues 219–277 (TVRGSVMNPNDHPHGGGEGKAPVGRKAPSTPWGKPALGLKTRNKKAKSDKLIVRRRNEK) is disordered. A compositionally biased stretch (basic and acidic residues) spans 264–277 (AKSDKLIVRRRNEK).

Belongs to the universal ribosomal protein uL2 family. Part of the 50S ribosomal subunit. Forms a bridge to the 30S subunit in the 70S ribosome.

One of the primary rRNA binding proteins. Required for association of the 30S and 50S subunits to form the 70S ribosome, for tRNA binding and peptide bond formation. It has been suggested to have peptidyltransferase activity; this is somewhat controversial. Makes several contacts with the 16S rRNA in the 70S ribosome. This chain is Large ribosomal subunit protein uL2, found in Streptococcus pneumoniae serotype 2 (strain D39 / NCTC 7466).